Consider the following 88-residue polypeptide: Small ribosomal subunit protein bS20 (88 aa).

It belongs to the bacterial ribosomal protein bS20 family.

Binds directly to 16S ribosomal RNA. This is Small ribosomal subunit protein bS20 from Bradyrhizobium diazoefficiens (strain JCM 10833 / BCRC 13528 / IAM 13628 / NBRC 14792 / USDA 110).